The following is a 45-amino-acid chain: Thymosin beta-15A homolog (45 aa).

Residues 19-45 (KKTNTEEKNTLPSKETIEQEKECVKSS) form a disordered region. The segment covering 21-45 (TNTEEKNTLPSKETIEQEKECVKSS) has biased composition (basic and acidic residues).

The protein belongs to the thymosin beta family.

The protein localises to the cytoplasm. Its subcellular location is the cytoskeleton. Functionally, plays an important role in the organization of the cytoskeleton. Binds to and sequesters actin monomers (G actin) and therefore inhibits actin polymerization. In Coturnix japonica (Japanese quail), this protein is Thymosin beta-15A homolog.